Reading from the N-terminus, the 132-residue chain is ATP synthase epsilon chain (132 aa).

This sequence belongs to the ATPase epsilon chain family. As to quaternary structure, F-type ATPases have 2 components, CF(1) - the catalytic core - and CF(0) - the membrane proton channel. CF(1) has five subunits: alpha(3), beta(3), gamma(1), delta(1), epsilon(1). CF(0) has three main subunits: a, b and c.

It localises to the cell membrane. In terms of biological role, produces ATP from ADP in the presence of a proton gradient across the membrane. The polypeptide is ATP synthase epsilon chain (Bacillus velezensis (strain DSM 23117 / BGSC 10A6 / LMG 26770 / FZB42) (Bacillus amyloliquefaciens subsp. plantarum)).